Here is a 501-residue protein sequence, read N- to C-terminus: Acetylcholine receptor subunit beta (501 aa).

An N-terminal signal peptide occupies residues 1 to 23; the sequence is MALGALLLILGILGTPLAPGARG. Residues 24 to 244 are Extracellular-facing; it reads SEAEGQLLKK…VIFYLIIRRK (221 aa). Cysteines 151 and 165 form a disulfide. The N-linked (GlcNAc...) asparagine glycan is linked to Asn164. A run of 3 helical transmembrane segments spans residues 245–269, 277–295, and 311–332; these read PLFY…VFYL, MGLS…LLLA, and YLMF…VLNL. Topologically, residues 333-469 are cytoplasmic; it reads HHRSPHTHQM…WQFVAMVVDR (137 aa). The disordered stretch occupies residues 362-381; it reads RPKPERDQLPEPHHSFSPRS. The segment covering 363-375 has biased composition (basic and acidic residues); it reads PKPERDQLPEPHH. Tyr390 is modified (phosphotyrosine; by Tyr-kinases). The chain crosses the membrane as a helical span at residues 470–488; that stretch reads LFLWTFIVFTSVGTLVIFL.

Belongs to the ligand-gated ion channel (TC 1.A.9) family. Acetylcholine receptor (TC 1.A.9.1) subfamily. Beta-1/CHRNB1 sub-subfamily. In terms of assembly, pentamer of two alpha chains, and one each of the beta, delta, and gamma (in immature muscle) or epsilon (in mature muscle) chains. The muscle heteropentamer composed of alpha-1, beta-1, delta, epsilon subunits interacts with the alpha-conotoxin ImII.

It is found in the postsynaptic cell membrane. The protein resides in the cell membrane. The catalysed reaction is K(+)(in) = K(+)(out). The enzyme catalyses Na(+)(in) = Na(+)(out). Its function is as follows. After binding acetylcholine, the AChR responds by an extensive change in conformation that affects all subunits and leads to opening of an ion-conducting channel across the plasma membrane. This Rattus norvegicus (Rat) protein is Acetylcholine receptor subunit beta (Chrnb1).